The following is an 86-amino-acid chain: Small ribosomal subunit protein uS17 (86 aa).

Belongs to the universal ribosomal protein uS17 family. Part of the 30S ribosomal subunit.

Functionally, one of the primary rRNA binding proteins, it binds specifically to the 5'-end of 16S ribosomal RNA. The protein is Small ribosomal subunit protein uS17 of Dehalococcoides mccartyi (strain ATCC BAA-2266 / KCTC 15142 / 195) (Dehalococcoides ethenogenes (strain 195)).